We begin with the raw amino-acid sequence, 143 residues long: AP-2 complex subunit sigma (143 aa).

The protein belongs to the adaptor complexes small subunit family. Adaptor protein complex 2 (AP-2) is a heterotetramer composed of two large adaptins (alpha-type subunit APL3 and beta-type subunit APL1), a medium chain (mu-type subunit APM4) and a small adaptin (sigma-type subunit APS2).

Its subcellular location is the cell membrane. It localises to the membrane. The protein localises to the coated pit. Component of the adaptor complexes which link clathrin to receptors in coated vesicles. Clathrin-associated protein complexes are believed to interact with the cytoplasmic tails of membrane proteins, leading to their selection and concentration. In Neurospora crassa (strain ATCC 24698 / 74-OR23-1A / CBS 708.71 / DSM 1257 / FGSC 987), this protein is AP-2 complex subunit sigma (aps-2).